We begin with the raw amino-acid sequence, 246 residues long: Biosynthetic peptidoglycan transglycosylase (246 aa).

Residues Ser20–Leu42 traverse the membrane as a helical segment.

This sequence belongs to the glycosyltransferase 51 family.

Its subcellular location is the cell inner membrane. The catalysed reaction is [GlcNAc-(1-&gt;4)-Mur2Ac(oyl-L-Ala-gamma-D-Glu-L-Lys-D-Ala-D-Ala)](n)-di-trans,octa-cis-undecaprenyl diphosphate + beta-D-GlcNAc-(1-&gt;4)-Mur2Ac(oyl-L-Ala-gamma-D-Glu-L-Lys-D-Ala-D-Ala)-di-trans,octa-cis-undecaprenyl diphosphate = [GlcNAc-(1-&gt;4)-Mur2Ac(oyl-L-Ala-gamma-D-Glu-L-Lys-D-Ala-D-Ala)](n+1)-di-trans,octa-cis-undecaprenyl diphosphate + di-trans,octa-cis-undecaprenyl diphosphate + H(+). It participates in cell wall biogenesis; peptidoglycan biosynthesis. Its function is as follows. Peptidoglycan polymerase that catalyzes glycan chain elongation from lipid-linked precursors. The protein is Biosynthetic peptidoglycan transglycosylase of Xanthomonas campestris pv. campestris (strain 8004).